Here is a 207-residue protein sequence, read N- to C-terminus: Large ribosomal subunit protein uL4 (207 aa).

The disordered stretch occupies residues 45–78 (RQGTHKTKNRAEVSGGGRKPWRQKGTGRARQGSI).

This sequence belongs to the universal ribosomal protein uL4 family. As to quaternary structure, part of the 50S ribosomal subunit.

In terms of biological role, one of the primary rRNA binding proteins, this protein initially binds near the 5'-end of the 23S rRNA. It is important during the early stages of 50S assembly. It makes multiple contacts with different domains of the 23S rRNA in the assembled 50S subunit and ribosome. Functionally, forms part of the polypeptide exit tunnel. The polypeptide is Large ribosomal subunit protein uL4 (Geobacillus sp. (strain WCH70)).